Consider the following 244-residue polypeptide: Carbonyl reductase [NADPH] 2 (244 aa).

11–39 (LVTGAGKGIGRDTVKALHASGAKVVAVTR) serves as a coordination point for NADP(+). Residue Ser-42 is modified to Phosphoserine. Ser-136 contributes to the substrate binding site. Tyr-149 serves as the catalytic Proton acceptor. At Ser-176 the chain carries Phosphoserine.

It belongs to the short-chain dehydrogenases/reductases (SDR) family. In terms of assembly, homotetramer. In terms of tissue distribution, predominantly expressed in lung, in ciliated cells, non-ciliated bronchiolar cells and type-II alveolar pneumocytes. Also detected in adipose tissue (at protein level). Low expression in testis, heart, kidney, spleen, brain and liver.

The protein localises to the mitochondrion matrix. It carries out the reaction a secondary alcohol + NADP(+) = a ketone + NADPH + H(+). In terms of biological role, may function in the pulmonary metabolism of endogenous carbonyl compounds, such as aliphatic aldehydes and ketones derived from lipid peroxidation, 3-ketosteroids and fatty aldehydes, as well as in xenobiotic metabolism. This Mus musculus (Mouse) protein is Carbonyl reductase [NADPH] 2 (Cbr2).